Consider the following 111-residue polypeptide: ATP-dependent Clp protease adapter protein ClpS (111 aa).

Belongs to the ClpS family. As to quaternary structure, binds to the N-terminal domain of the chaperone ClpA.

Functionally, involved in the modulation of the specificity of the ClpAP-mediated ATP-dependent protein degradation. The sequence is that of ATP-dependent Clp protease adapter protein ClpS from Legionella pneumophila (strain Corby).